A 227-amino-acid chain; its full sequence is uncharacterized protein (227 aa).

The first 23 residues, 1-23 (MKKLTVTFLTFISIFFAATAAFA), serve as a signal peptide directing secretion.

This is an uncharacterized protein from Coxiella burnetii (strain RSA 493 / Nine Mile phase I).